We begin with the raw amino-acid sequence, 236 residues long: Small ribosomal subunit protein uS2c (236 aa).

Belongs to the universal ribosomal protein uS2 family.

The protein localises to the plastid. It is found in the chloroplast. The chain is Small ribosomal subunit protein uS2c (rps2) from Manihot esculenta (Cassava).